The chain runs to 283 residues: MDLLGAHVSIAGGIHNAVDRGVSSGCGVIQIFTQNSNQWKGKAVSPADAQLFRDKLTASGLSHVVSHDIYLINLAAAPGEVKDKSLIAFKEEMQRCAALGIDKIVMHPGSHTGDGEETGIRRICEAFDQLFAEVPEFTGKVLLENTAGQGTNLGYRFDHLKSIIEGSSYPTRFGVCFDTCHAFASGYPIADRDGYRRTFDEFDSALGIDKLMAFHLNDSKKGLGCKVDRHEHIGAGALGLEPFRFILNDPHFKLVPKFIETPKGDADEMDVVNLKLLRSLVEG.

Positions 67, 107, 144, 178, 181, 215, 228, 230, and 260 each coordinate Zn(2+).

It belongs to the AP endonuclease 2 family. Zn(2+) is required as a cofactor.

The catalysed reaction is Endonucleolytic cleavage to 5'-phosphooligonucleotide end-products.. Functionally, endonuclease IV plays a role in DNA repair. It cleaves phosphodiester bonds at apurinic or apyrimidinic (AP) sites, generating a 3'-hydroxyl group and a 5'-terminal sugar phosphate. This chain is Probable endonuclease 4, found in Citrifermentans bemidjiense (strain ATCC BAA-1014 / DSM 16622 / JCM 12645 / Bem) (Geobacter bemidjiensis).